The sequence spans 202 residues: LexA repressor (202 aa).

The H-T-H motif DNA-binding region spans 28–48 (RAEIAQQLGFRSPNAAEEHLK). Active-site for autocatalytic cleavage activity residues include Ser119 and Lys156.

The protein belongs to the peptidase S24 family. As to quaternary structure, homodimer.

The catalysed reaction is Hydrolysis of Ala-|-Gly bond in repressor LexA.. Functionally, represses a number of genes involved in the response to DNA damage (SOS response), including recA and lexA. Binds to the 16 bp palindromic sequence 5'-CTGTATATATATACAG-3'. In the presence of single-stranded DNA, RecA interacts with LexA causing an autocatalytic cleavage which disrupts the DNA-binding part of LexA, leading to derepression of the SOS regulon and eventually DNA repair. In Pectobacterium carotovorum subsp. carotovorum (Erwinia carotovora subsp. carotovora), this protein is LexA repressor.